Here is a 388-residue protein sequence, read N- to C-terminus: Beta-hexosaminidase LpqI (388 aa).

An N-terminal signal peptide occupies residues Met-1–Ala-19. Cys-20 is lipidated: N-palmitoyl cysteine. Cys-20 carries S-diacylglycerol cysteine lipidation. Substrate is bound by residues Asp-123, Arg-131, Arg-193, and Lys-223–His-224. His-236 (proton donor/acceptor) is an active-site residue. Asp-311 acts as the Nucleophile in catalysis.

It belongs to the glycosyl hydrolase 3 family.

It localises to the cell inner membrane. The catalysed reaction is Hydrolysis of terminal non-reducing N-acetyl-D-hexosamine residues in N-acetyl-beta-D-hexosaminides.. It participates in cell wall biogenesis; peptidoglycan recycling. Plays a role in peptidoglycan recycling by cleaving the terminal beta-1,4-linked N-acetylglucosamine (GlcNAc) from peptidoglycan fragments. Acts as a regulator for GlcNAc-MurNAc levels by cleaving disaccharides and allowing the breakdown of MurNAc. The chain is Beta-hexosaminidase LpqI from Mycobacterium tuberculosis (strain ATCC 25618 / H37Rv).